We begin with the raw amino-acid sequence, 296 residues long: MIPIVLQTDFPNLKLVNKGKVRDIYDLGEHLLIVTSDRISAFDVVMNEGIPYKGFVLTQISKFWFDAFSDIVPHHLVSTEVDDFPAETRPYRDQLEGRSMLVRKAEPLPIECIVRGYLAGSGWKEYRQQGTVCGIALPPGMVESQKLPEPIFTPSTKAELGAHDENISFEKATELCGGDIAAQAREVALTIYGRARDEMAAKGIIVADTKFEFGLRDGRLMWIDEALTPDSSRFWPQDEYRQGGAQPSFDKQFLRDYLETLDWNKQAPAPTLPDDIVLKTSEKYLEALFRITGLKP.

This sequence belongs to the SAICAR synthetase family.

The enzyme catalyses 5-amino-1-(5-phospho-D-ribosyl)imidazole-4-carboxylate + L-aspartate + ATP = (2S)-2-[5-amino-1-(5-phospho-beta-D-ribosyl)imidazole-4-carboxamido]succinate + ADP + phosphate + 2 H(+). It functions in the pathway purine metabolism; IMP biosynthesis via de novo pathway; 5-amino-1-(5-phospho-D-ribosyl)imidazole-4-carboxamide from 5-amino-1-(5-phospho-D-ribosyl)imidazole-4-carboxylate: step 1/2. The chain is Phosphoribosylaminoimidazole-succinocarboxamide synthase from Syntrophotalea carbinolica (strain DSM 2380 / NBRC 103641 / GraBd1) (Pelobacter carbinolicus).